Reading from the N-terminus, the 212-residue chain is Cytidylate kinase (212 aa).

9–17 (GPAAAGKGT) provides a ligand contact to ATP.

The protein belongs to the cytidylate kinase family. Type 1 subfamily.

It is found in the cytoplasm. It catalyses the reaction CMP + ATP = CDP + ADP. It carries out the reaction dCMP + ATP = dCDP + ADP. The protein is Cytidylate kinase of Sinorhizobium medicae (strain WSM419) (Ensifer medicae).